A 73-amino-acid chain; its full sequence is Myosin-IB light chain (73 aa).

2 EF-hand domains span residues aspartate 3–methionine 38 and methionine 38–serine 73. Positions 16, 18, 20, and 27 each coordinate Ca(2+).

Myosin I is a dimer of a heavy and a light chain. Inability to self-assemble into filaments. Interacts with myoB. Does not interact with myoC or myoD.

In terms of biological role, functions as the light chain for myosin-B. Binds calcium with submicromolar affinity and may sense physiological calcium changes. The chain is Myosin-IB light chain (mlcB) from Dictyostelium discoideum (Social amoeba).